Here is a 117-residue protein sequence, read N- to C-terminus: Large ribosomal subunit protein eL30B (117 aa).

Over residues 1–14 the composition is skewed to low complexity; sequence MSAAPTTAPVAAVS. Residues 1 to 22 form a disordered region; that stretch reads MSAAPTTAPVAAVSKKGKKSGD.

This sequence belongs to the eukaryotic ribosomal protein eL30 family. As to quaternary structure, component of the large ribosomal subunit (LSU). Mature yeast ribosomes consist of a small (40S) and a large (60S) subunit. The 40S small subunit contains 1 molecule of ribosomal RNA (18S rRNA) and at least 33 different proteins. The large 60S subunit contains 3 rRNA molecules (25S, 5.8S and 5S rRNA) and at least 46 different proteins.

It localises to the cytoplasm. In terms of biological role, component of the ribosome, a large ribonucleoprotein complex responsible for the synthesis of proteins in the cell. The small ribosomal subunit (SSU) binds messenger RNAs (mRNAs) and translates the encoded message by selecting cognate aminoacyl-transfer RNA (tRNA) molecules. The large subunit (LSU) contains the ribosomal catalytic site termed the peptidyl transferase center (PTC), which catalyzes the formation of peptide bonds, thereby polymerizing the amino acids delivered by tRNAs into a polypeptide chain. The nascent polypeptides leave the ribosome through a tunnel in the LSU and interact with protein factors that function in enzymatic processing, targeting, and the membrane insertion of nascent chains at the exit of the ribosomal tunnel. This Schizosaccharomyces pombe (strain 972 / ATCC 24843) (Fission yeast) protein is Large ribosomal subunit protein eL30B (rpl3002).